Consider the following 86-residue polypeptide: Polcalcin Nic t 2 (86 aa).

EF-hand domains are found at residues 8–42 (QDIA…TLGS) and 43–78 (VTPE…NRGL). Aspartate 21, asparagine 23, aspartate 25, glutamine 27, glutamate 32, aspartate 56, asparagine 58, aspartate 60, and glutamate 67 together coordinate Ca(2+).

The chain is Polcalcin Nic t 2 (Nict2) from Nicotiana tabacum (Common tobacco).